Reading from the N-terminus, the 173-residue chain is Photosystem I assembly protein Ycf3 (173 aa).

3 TPR repeats span residues 35–68 (AYIY…EENP), 72–105 (GETL…NPKQ), and 120–153 (GRSA…YPGG).

It belongs to the Ycf3 family.

It localises to the cellular thylakoid membrane. In terms of biological role, essential for the assembly of the photosystem I (PSI) complex. May act as a chaperone-like factor to guide the assembly of the PSI subunits. The sequence is that of Photosystem I assembly protein Ycf3 from Prochlorococcus marinus (strain MIT 9211).